The sequence spans 163 residues: PTS system fructose-specific EIIB component (163 aa).

The 163-residue stretch at M1–K163 folds into the PTS EIIB type-4 domain. H15 serves as the catalytic Pros-phosphohistidine intermediate. The residue at position 15 (H15) is a Phosphohistidine; by EIIA.

The protein resides in the cytoplasm. The enzyme catalyses D-fructose(out) + N(pros)-phospho-L-histidyl-[protein] = D-fructose 1-phosphate(in) + L-histidyl-[protein]. Its function is as follows. The phosphoenolpyruvate-dependent sugar phosphotransferase system (sugar PTS), a major carbohydrate active -transport system, catalyzes the phosphorylation of incoming sugar substrates concomitantly with their translocation across the cell membrane. The enzyme II LevDE PTS system is involved in fructose transport. LevD and LevE act as negative regulators of the levanase operon. They may be involved in a PTS-mediated phosphorylation of a regulator. The polypeptide is PTS system fructose-specific EIIB component (Bacillus subtilis (strain 168)).